A 332-amino-acid polypeptide reads, in one-letter code: Glycerol-3-phosphate dehydrogenase [NAD(P)+] (332 aa).

Residues serine 11, phenylalanine 12, lysine 32, and lysine 106 each coordinate NADPH. Sn-glycerol 3-phosphate is bound by residues lysine 106, glycine 137, and serine 139. Alanine 141 is an NADPH binding site. Residues lysine 192, aspartate 245, serine 255, arginine 256, and asparagine 257 each coordinate sn-glycerol 3-phosphate. Catalysis depends on lysine 192, which acts as the Proton acceptor. Position 256 (arginine 256) interacts with NADPH. NADPH contacts are provided by valine 280 and glutamate 282.

The protein belongs to the NAD-dependent glycerol-3-phosphate dehydrogenase family.

It localises to the cytoplasm. The catalysed reaction is sn-glycerol 3-phosphate + NAD(+) = dihydroxyacetone phosphate + NADH + H(+). It carries out the reaction sn-glycerol 3-phosphate + NADP(+) = dihydroxyacetone phosphate + NADPH + H(+). It functions in the pathway membrane lipid metabolism; glycerophospholipid metabolism. Functionally, catalyzes the reduction of the glycolytic intermediate dihydroxyacetone phosphate (DHAP) to sn-glycerol 3-phosphate (G3P), the key precursor for phospholipid synthesis. The sequence is that of Glycerol-3-phosphate dehydrogenase [NAD(P)+] from Staphylococcus haemolyticus (strain JCSC1435).